We begin with the raw amino-acid sequence, 1434 residues long: Gag-Pol polyprotein (1434 aa).

The N-myristoyl glycine; by host moiety is linked to residue Gly2. An interaction with Gp41 region spans residues 7-31 (VLSGGKLDAWEKIRLRPGGKKKYRL). Positions 8 to 43 (LSGGKLDAWEKIRLRPGGKKKYRLKHIVWASRELKR) are interaction with host CALM1. The segment at 12–19 (KLDAWEKI) is interaction with host AP3D1. Residues 14–33 (DAWEKIRLRPGGKKKYRLKH) are interaction with membrane phosphatidylinositol 4,5-bisphosphate and RNA. The short motif at 16–22 (WEKIRLR) is the Nuclear export signal element. The short motif at 26–32 (KKKYRLK) is the Nuclear localization signal element. Residues 73-77 (EELKS) are interaction with membrane phosphatidylinositol 4,5-bisphosphate. Basic and acidic residues predominate over residues 103–112 (KLQEEQDKHQ). Positions 103–124 (KLQEEQDKHQQKTQQATADKGV) are disordered. The residue at position 132 (Tyr132) is a Phosphotyrosine; by host. Positions 189–227 (NTVGGHQAAMQMLKDTINEEAAEWDRLHPVHAGPIPPGQ) are interaction with human PPIA/CYPA and NUP153. Residues 277–363 (YSPVSILDIK…GGPSHKARIL (87 aa)) form a dimerization/Multimerization of capsid protein p24 region. 2 CCHC-type zinc fingers span residues 389–406 (VKCF…NCRA) and 410–427 (RGCW…DCTE). The interval 443 to 483 (EARKFSSEQTRANSPASRELRVRGGDSSLPEAGAERQGTGS) is disordered. Over residues 449 to 458 (SEQTRANSPA) the composition is skewed to polar residues. The tract at residues 488–492 (PQITL) is dimerization of protease. In terms of domain architecture, Peptidase A2 spans 507-576 (REALLDTGAD…TPVNIIGRNM (70 aa)). The active-site For protease activity; shared with dimeric partner is the Asp512. Dimerization of protease regions lie at residues 536–542 (GIGGFIK) and 575–587 (NMLT…LNFP). The region spanning 630–820 (EGKISKIGPE…PPFLWMGYEL (191 aa)) is the Reverse transcriptase domain. Mg(2+) contacts are provided by Asp696, Asp771, and Asp772. Positions 813–821 (FLWMGYELH) are RT 'primer grip'. The Tryptophan repeat motif signature appears at 984-1000 (WEIWWTEYWQATWIPEW). One can recognise an RNase H type-1 domain in the interval 1020–1143 (IIGAETFYVD…VDKLVSTGIR (124 aa)). Positions 1029, 1064, 1084, and 1135 each coordinate Mg(2+). An Integrase-type zinc finger spans residues 1149 to 1190 (DGIDKAQEEHEKYHSNWRAMASDFNLPPVVAKEIVASCDKCQ). Zn(2+)-binding residues include His1158, His1162, Cys1186, and Cys1189. The region spanning 1200-1350 (VDCSPGIWQL…SAGERIIDII (151 aa)) is the Integrase catalytic domain. Residues Asp1210, Asp1262, and Glu1298 each contribute to the Mg(2+) site. Positions 1369–1416 (FRVYFRDSRDPVWKGPAKLLWKGEGAVVIQDNNEIKVIPRRKAKIIRD) form a DNA-binding region, integrase-type.

Homotrimer; further assembles as hexamers of trimers. Interacts with gp41 (via C-terminus). Interacts with host CALM1; this interaction induces a conformational change in the Matrix protein, triggering exposure of the myristate group. Interacts with host AP3D1; this interaction allows the polyprotein trafficking to multivesicular bodies during virus assembly. Part of the pre-integration complex (PIC) which is composed of viral genome, matrix protein, Vpr and integrase. As to quaternary structure, homodimer; the homodimer further multimerizes as homohexamers or homopentamers. Interacts with human PPIA/CYPA; This interaction stabilizes the capsid. Interacts with human NUP153. Interacts with host PDZD8; this interaction stabilizes the capsid. Interacts with monkey TRIM5; this interaction destabilizes the capsid. In terms of assembly, homodimer, whose active site consists of two apposed aspartic acid residues. Heterodimer of p66 RT and p51 RT (RT p66/p51). Heterodimerization of RT is essential for DNA polymerase activity. The overall folding of the subdomains is similar in p66 RT and p51 RT but the spatial arrangements of the subdomains are dramatically different. As to quaternary structure, homotetramer; may further associate as a homohexadecamer. Part of the pre-integration complex (PIC) which is composed of viral genome, matrix protein, Vpr and integrase. Interacts with human SMARCB1/INI1 and human PSIP1/LEDGF isoform 1. Interacts with human KPNA3; this interaction might play a role in nuclear import of the pre-integration complex. Interacts with human NUP153; this interaction might play a role in nuclear import of the pre-integration complex. It depends on Mg(2+) as a cofactor. Specific enzymatic cleavages by the viral protease yield mature proteins. The protease is released by autocatalytic cleavage. The polyprotein is cleaved during and after budding, this process is termed maturation. Proteolytic cleavage of p66 RT removes the RNase H domain to yield the p51 RT subunit. Nucleocapsid protein p7 might be further cleaved after virus entry. In terms of processing, tyrosine phosphorylated presumably in the virion by a host kinase. Phosphorylation is apparently not a major regulator of membrane association. Post-translationally, phosphorylated possibly by host MAPK1; this phosphorylation is necessary for Pin1-mediated virion uncoating. Methylated by host PRMT6, impairing its function by reducing RNA annealing and the initiation of reverse transcription.

The protein localises to the host cell membrane. It localises to the host endosome. The protein resides in the host multivesicular body. It is found in the virion membrane. Its subcellular location is the host nucleus. The protein localises to the host cytoplasm. It localises to the virion. The catalysed reaction is Specific for a P1 residue that is hydrophobic, and P1' variable, but often Pro.. The enzyme catalyses Endohydrolysis of RNA in RNA/DNA hybrids. Three different cleavage modes: 1. sequence-specific internal cleavage of RNA. Human immunodeficiency virus type 1 and Moloney murine leukemia virus enzymes prefer to cleave the RNA strand one nucleotide away from the RNA-DNA junction. 2. RNA 5'-end directed cleavage 13-19 nucleotides from the RNA end. 3. DNA 3'-end directed cleavage 15-20 nucleotides away from the primer terminus.. It catalyses the reaction 3'-end directed exonucleolytic cleavage of viral RNA-DNA hybrid.. It carries out the reaction DNA(n) + a 2'-deoxyribonucleoside 5'-triphosphate = DNA(n+1) + diphosphate. With respect to regulation, protease: The viral protease is inhibited by many synthetic protease inhibitors (PIs), such as amprenavir, atazanavir, indinavir, loprinavir, nelfinavir, ritonavir and saquinavir. Use of protease inhibitors in tritherapy regimens permit more ambitious therapeutic strategies. Reverse transcriptase/ribonuclease H: RT can be inhibited either by nucleoside RT inhibitors (NRTIs) or by non nucleoside RT inhibitors (NNRTIs). NRTIs act as chain terminators, whereas NNRTIs inhibit DNA polymerization by binding a small hydrophobic pocket near the RT active site and inducing an allosteric change in this region. Classical NRTIs are abacavir, adefovir (PMEA), didanosine (ddI), lamivudine (3TC), stavudine (d4T), tenofovir (PMPA), zalcitabine (ddC), and zidovudine (AZT). Classical NNRTIs are atevirdine (BHAP U-87201E), delavirdine, efavirenz (DMP-266), emivirine (I-EBU), and nevirapine (BI-RG-587). The tritherapies used as a basic effective treatment of AIDS associate two NRTIs and one NNRTI. Mediates, with Gag polyprotein, the essential events in virion assembly, including binding the plasma membrane, making the protein-protein interactions necessary to create spherical particles, recruiting the viral Env proteins, and packaging the genomic RNA via direct interactions with the RNA packaging sequence (Psi). Gag-Pol polyprotein may regulate its own translation, by the binding genomic RNA in the 5'-UTR. At low concentration, the polyprotein would promote translation, whereas at high concentration, the polyprotein would encapsidate genomic RNA and then shut off translation. In terms of biological role, targets the polyprotein to the plasma membrane via a multipartite membrane-binding signal, that includes its myristoylated N-terminus. Matrix protein is part of the pre-integration complex. Implicated in the release from host cell mediated by Vpu. Binds to RNA. Functionally, forms the conical core that encapsulates the genomic RNA-nucleocapsid complex in the virion. Most core are conical, with only 7% tubular. The core is constituted by capsid protein hexamer subunits. The core is disassembled soon after virion entry. Host restriction factors such as TRIM5-alpha or TRIMCyp bind retroviral capsids and cause premature capsid disassembly, leading to blocks in reverse transcription. Capsid restriction by TRIM5 is one of the factors which restricts HIV-1 to the human species. Host PIN1 apparently facilitates the virion uncoating. On the other hand, interactions with PDZD8 or CYPA stabilize the capsid. Its function is as follows. Encapsulates and protects viral dimeric unspliced genomic RNA (gRNA). Binds these RNAs through its zinc fingers. Acts as a nucleic acid chaperone which is involved in rearangement of nucleic acid secondary structure during gRNA retrotranscription. Also facilitates template switch leading to recombination. As part of the polyprotein, participates in gRNA dimerization, packaging, tRNA incorporation and virion assembly. Aspartyl protease that mediates proteolytic cleavages of Gag and Gag-Pol polyproteins during or shortly after the release of the virion from the plasma membrane. Cleavages take place as an ordered, step-wise cascade to yield mature proteins. This process is called maturation. Displays maximal activity during the budding process just prior to particle release from the cell. Also cleaves Nef and Vif, probably concomitantly with viral structural proteins on maturation of virus particles. Hydrolyzes host EIF4GI and PABP1 in order to shut off the capped cellular mRNA translation. The resulting inhibition of cellular protein synthesis serves to ensure maximal viral gene expression and to evade host immune response. Also mediates cleavage of host YTHDF3. Mediates cleavage of host CARD8, thereby activating the CARD8 inflammasome, leading to the clearance of latent HIV-1 in patient CD4(+) T-cells after viral reactivation; in contrast, HIV-1 can evade CARD8-sensing when its protease remains inactive in infected cells prior to viral budding. In terms of biological role, multifunctional enzyme that converts the viral RNA genome into dsDNA in the cytoplasm, shortly after virus entry into the cell. This enzyme displays a DNA polymerase activity that can copy either DNA or RNA templates, and a ribonuclease H (RNase H) activity that cleaves the RNA strand of RNA-DNA heteroduplexes in a partially processive 3' to 5' endonucleasic mode. Conversion of viral genomic RNA into dsDNA requires many steps. A tRNA(3)-Lys binds to the primer-binding site (PBS) situated at the 5'-end of the viral RNA. RT uses the 3' end of the tRNA primer to perform a short round of RNA-dependent minus-strand DNA synthesis. The reading proceeds through the U5 region and ends after the repeated (R) region which is present at both ends of viral RNA. The portion of the RNA-DNA heteroduplex is digested by the RNase H, resulting in a ssDNA product attached to the tRNA primer. This ssDNA/tRNA hybridizes with the identical R region situated at the 3' end of viral RNA. This template exchange, known as minus-strand DNA strong stop transfer, can be either intra- or intermolecular. RT uses the 3' end of this newly synthesized short ssDNA to perform the RNA-dependent minus-strand DNA synthesis of the whole template. RNase H digests the RNA template except for two polypurine tracts (PPTs) situated at the 5'-end and near the center of the genome. It is not clear if both polymerase and RNase H activities are simultaneous. RNase H probably can proceed both in a polymerase-dependent (RNA cut into small fragments by the same RT performing DNA synthesis) and a polymerase-independent mode (cleavage of remaining RNA fragments by free RTs). Secondly, RT performs DNA-directed plus-strand DNA synthesis using the PPTs that have not been removed by RNase H as primers. PPTs and tRNA primers are then removed by RNase H. The 3' and 5' ssDNA PBS regions hybridize to form a circular dsDNA intermediate. Strand displacement synthesis by RT to the PBS and PPT ends produces a blunt ended, linear dsDNA copy of the viral genome that includes long terminal repeats (LTRs) at both ends. Functionally, catalyzes viral DNA integration into the host chromosome, by performing a series of DNA cutting and joining reactions. This enzyme activity takes place after virion entry into a cell and reverse transcription of the RNA genome in dsDNA. The first step in the integration process is 3' processing. This step requires a complex comprising the viral genome, matrix protein, Vpr and integrase. This complex is called the pre-integration complex (PIC). The integrase protein removes 2 nucleotides from each 3' end of the viral DNA, leaving recessed CA OH's at the 3' ends. In the second step, the PIC enters cell nucleus. This process is mediated through integrase and Vpr proteins, and allows the virus to infect a non dividing cell. This ability to enter the nucleus is specific of lentiviruses, other retroviruses cannot and rely on cell division to access cell chromosomes. In the third step, termed strand transfer, the integrase protein joins the previously processed 3' ends to the 5' ends of strands of target cellular DNA at the site of integration. The 5'-ends are produced by integrase-catalyzed staggered cuts, 5 bp apart. A Y-shaped, gapped, recombination intermediate results, with the 5'-ends of the viral DNA strands and the 3' ends of target DNA strands remaining unjoined, flanking a gap of 5 bp. The last step is viral DNA integration into host chromosome. This involves host DNA repair synthesis in which the 5 bp gaps between the unjoined strands are filled in and then ligated. Since this process occurs at both cuts flanking the HIV genome, a 5 bp duplication of host DNA is produced at the ends of HIV-1 integration. Alternatively, Integrase may catalyze the excision of viral DNA just after strand transfer, this is termed disintegration. This Homo sapiens (Human) protein is Gag-Pol polyprotein (gag-pol).